Here is a 430-residue protein sequence, read N- to C-terminus: Proteasome-activating nucleotidase (430 aa).

A coiled-coil region spans residues 9 to 89 (TELKKEKKAF…LRRELDRMRV (81 aa)). Residues 214 to 219 (GTGKTL) and His-353 each bind ATP. The docks into pockets in the proteasome alpha-ring to cause gate opening stretch occupies residues 428 to 430 (LYR).

It belongs to the AAA ATPase family. Homohexamer. The hexameric complex has a two-ring architecture resembling a top hat that caps the 20S proteasome core at one or both ends. Alone, can form a complex composed of two stacked hexameric rings in vitro. Upon ATP-binding, the C-terminus of PAN interacts with the alpha-rings of the proteasome core by binding to the intersubunit pockets.

Its subcellular location is the cytoplasm. With respect to regulation, ATPase activity is inhibited by EDTA, N-ethylmaleimide (NEM) and p-chloromercuriphenyl-sulfonic acid (PCMS) in vitro. Functionally, ATPase which is responsible for recognizing, binding, unfolding and translocation of substrate proteins into the archaeal 20S proteasome core particle. Is essential for opening the gate of the 20S proteasome via an interaction with its C-terminus, thereby allowing substrate entry and access to the site of proteolysis. Thus, the C-termini of the proteasomal ATPase function like a 'key in a lock' to induce gate opening and therefore regulate proteolysis. Unfolding activity requires energy from ATP hydrolysis, whereas ATP binding alone promotes ATPase-20S proteasome association which triggers gate opening, and supports translocation of unfolded substrates. In addition to ATP, is able to cleave other nucleotide triphosphates such as CTP, GTP and UTP, but hydrolysis of these other nucleotides is less effective in promoting proteolysis than ATP. Moreover, PAN by itself can function as a chaperone in vitro. The protein is Proteasome-activating nucleotidase of Methanocaldococcus jannaschii (strain ATCC 43067 / DSM 2661 / JAL-1 / JCM 10045 / NBRC 100440) (Methanococcus jannaschii).